We begin with the raw amino-acid sequence, 1129 residues long: Nuclear pore complex protein 15 (1129 aa).

This sequence belongs to the nucleoporin Nup133 family.

Its subcellular location is the nucleus envelope. The protein localises to the nucleus. It localises to the nuclear pore complex. In terms of biological role, important for early nematode development. The polypeptide is Nuclear pore complex protein 15 (Caenorhabditis elegans).